Reading from the N-terminus, the 297-residue chain is MSHSDQSQRFLFDDTDVRGEMVDLERSYSEVLAKHPYPEPVAQLLGEMLAAASLLCGTLKFDGLLVLQARSSGAVPLLMVECSSDRQVRGLARYSAEAIGAGAGMQELMPEGVLTLTVDPVKGQRYQGIVALEGVNLAECLSNYFASSEQLPTRFWLNADGRRARGLLLQQLPADRLKDPEAREASWQHLTTLADTLTAEELLALDNETVLHRLYHEETVRLFEPQPLVFHCSCSRERSANALVSLGQADCERLLEEEEGAITIDCQFCNQRYLFDASDVAQLFAGAGSQGPSATRH.

Cystine bridges form between C232–C234 and C266–C269.

This sequence belongs to the HSP33 family. Under oxidizing conditions two disulfide bonds are formed involving the reactive cysteines. Under reducing conditions zinc is bound to the reactive cysteines and the protein is inactive.

The protein localises to the cytoplasm. Redox regulated molecular chaperone. Protects both thermally unfolding and oxidatively damaged proteins from irreversible aggregation. Plays an important role in the bacterial defense system toward oxidative stress. The sequence is that of 33 kDa chaperonin from Pseudomonas paraeruginosa (strain DSM 24068 / PA7) (Pseudomonas aeruginosa (strain PA7)).